A 127-amino-acid polypeptide reads, in one-letter code: MYRTMMSGKLHRATVTEANLNYVGSITIDEDLIDAVGMLPNEKVQIVNNNNGARLETYIIPGKRGSGVICLNGAAARLVQEGDKVIIISYKMMSDQEAASHEPKVAVLNDQNKIEQMLGNEPARTIL.

The active-site Schiff-base intermediate with substrate; via pyruvic acid is the serine 25. A Pyruvic acid (Ser) modification is found at serine 25. Substrate is bound at residue threonine 57. The active-site Proton donor is tyrosine 58. 73 to 75 serves as a coordination point for substrate; the sequence is GAA.

This sequence belongs to the PanD family. In terms of assembly, heterooctamer of four alpha and four beta subunits. Pyruvate serves as cofactor. Post-translationally, is synthesized initially as an inactive proenzyme, which is activated by self-cleavage at a specific serine bond to produce a beta-subunit with a hydroxyl group at its C-terminus and an alpha-subunit with a pyruvoyl group at its N-terminus.

It localises to the cytoplasm. It carries out the reaction L-aspartate + H(+) = beta-alanine + CO2. Its pathway is cofactor biosynthesis; (R)-pantothenate biosynthesis; beta-alanine from L-aspartate: step 1/1. Catalyzes the pyruvoyl-dependent decarboxylation of aspartate to produce beta-alanine. The chain is Aspartate 1-decarboxylase from Bacillus subtilis (strain 168).